A 151-amino-acid chain; its full sequence is SKVAELANAVVSNADQKDLLRMSWGVLSVDMEGTGLMLMANLFKTSPSAKGKFARLGDVSAGKDNSKLRGHSITLMYALQNFVDALDDVERLKCVVEKFAVNHINRQISADEFGEIVGPLRQTLKARMGNYFDEDTVSAWASLVAVVQASL.

S1 is subject to N-acetylserine. Positions 11-151 (VSNADQKDLL…SLVAVVQASL (141 aa)) constitute a Globin domain. Heme b is bound at residue H103.

This sequence belongs to the globin family. In terms of assembly, heterotetramer of two alpha chains and two beta chains.

In Anadara inaequivalvis (Inequivalve ark), this protein is Globin-2 B chain.